The primary structure comprises 813 residues: Kinesin-like protein KIN-8B (813 aa).

The region spanning 14-345 is the Kinesin motor domain; the sequence is TLTVAVKCRP…LKYADRAKEI (332 aa). An ATP-binding site is contributed by 104–111; that stretch reads GSTGSGKT. The stretch at 349-391 forms a coiled coil; the sequence is IQKNIGTIDTHMSDYQRMIDNLQSEVSQLKTQLAEKESQLSIK. Disordered stretches follow at residues 664–694 and 756–813; these read GSRP…PRMA and AVST…RQHQ. Composition is skewed to polar residues over residues 682–694, 761–791, and 804–813; these read YPQT…PRMA, GARN…NSHT, and KGNNTQRQHQ.

It belongs to the TRAFAC class myosin-kinesin ATPase superfamily. Kinesin family. KIN-8 subfamily.

The polypeptide is Kinesin-like protein KIN-8B (Arabidopsis thaliana (Mouse-ear cress)).